The sequence spans 427 residues: mRNA cap guanine-N(7) methyltransferase (427 aa).

The segment at methionine 1–alanine 79 is disordered. 5 positions are modified to phosphoserine: serine 22, serine 24, serine 29, serine 46, and serine 48. The span at histidine 44–glycine 57 shows a compositional bias: basic and acidic residues. The region spanning serine 103–cysteine 411 is the mRNA cap 0 methyltransferase domain. Residue asparagine 112–asparagine 113 coordinates mRNA. Lysine 116, cysteine 143, aspartate 165, aspartate 202, glutamine 225, and tyrosine 230 together coordinate S-adenosyl-L-methionine.

Belongs to the class I-like SAM-binding methyltransferase superfamily. mRNA cap 0 methyltransferase family.

Its subcellular location is the nucleus. It carries out the reaction a 5'-end (5'-triphosphoguanosine)-ribonucleoside in mRNA + S-adenosyl-L-methionine = a 5'-end (N(7)-methyl 5'-triphosphoguanosine)-ribonucleoside in mRNA + S-adenosyl-L-homocysteine. Functionally, mRNA-capping methyltransferase that methylates the N7 position of the added guanosine to the 5'-cap structure of mRNAs. Binds RNA containing 5'-terminal GpppC. In Drosophila melanogaster (Fruit fly), this protein is mRNA cap guanine-N(7) methyltransferase.